Consider the following 199-residue polypeptide: uncharacterized protein (199 aa).

An N-terminal signal peptide occupies residues methionine 1–alanine 23.

This is an uncharacterized protein from Escherichia coli (strain K12).